We begin with the raw amino-acid sequence, 721 residues long: MPDLLIELRSEEIPARMQRKAAGDLKKLVTDALVEAGLTYEGAREYWTPRRLTLDIRGLNARSADMREERKGPRIDANDKAIEGFLRAAGLSSISEAHVHNDPKKGDFYVAHIVRRGREAEEIVADVMPAIIRDFPWPKSMRSGAASAIPGSLRWVRPLQSIVCTFGAEHDETKVIPFEVDGIVASNITYGHRFHAPEAIAVRRFADYAEKLGKAKVVIDAERRKEIISADAHNIAFANGLELVEDEGLLEEVAGLVEWPKVLMGSFEESYLAIPSEIIRLTIKTNQKCFVTRKPGAETLSNRFILVSNIEAKDGGKEIVHGNGKVVRARLSDAAHFWKRDQGDLPDLETLAASAGKFGLDLKKPLDQRMAKLDALNVTFHAKLGTQGERVARIRSLAAALAKITGADPASVARAAVLAKADLRTEAVGEFPELQGIMGHKYAVLQGESAAVANAIEDHYKPQGPSDHVPTDPVSVSVALADKLDTLVGFWAIDERPTGSKDPYALRRAALGVIRLILEGRARLPLLPCFDVALASLKLQRPAMAADVSGDLLAFFHDRLKVYLRDLGARHDLIDAVLAPDADDLLMIARRVEALTAFITAEEGRNLLAGTKRATQILAAEEKKGTEVAASVDEELFRLDAERLLYASIKVASDGARAAIAKEDFRSAMEALSKLREPVDAFFNDVLVNDEDKAIRANRLALLGLIRSATGEVADFSKISG.

Belongs to the class-II aminoacyl-tRNA synthetase family. As to quaternary structure, tetramer of two alpha and two beta subunits.

The protein resides in the cytoplasm. It carries out the reaction tRNA(Gly) + glycine + ATP = glycyl-tRNA(Gly) + AMP + diphosphate. The polypeptide is Glycine--tRNA ligase beta subunit (Sinorhizobium medicae (strain WSM419) (Ensifer medicae)).